The chain runs to 352 residues: Protein-glutamate methylesterase/protein-glutamine glutaminase 2 (352 aa).

In terms of domain architecture, Response regulatory spans 1–116 (MVVDDSAVVR…KQFLTDSADE (116 aa)). The residue at position 50 (Asp50) is a 4-aspartylphosphate. A CheB-type methylesterase domain is found at 162-352 (AQTTERIVAI…MAREIVTQLQ (191 aa)). Active-site residues include Ser174, His200, and Asp296.

It belongs to the CheB family. In terms of processing, phosphorylated by CheA. Phosphorylation of the N-terminal regulatory domain activates the methylesterase activity.

The protein localises to the cytoplasm. The catalysed reaction is [protein]-L-glutamate 5-O-methyl ester + H2O = L-glutamyl-[protein] + methanol + H(+). It catalyses the reaction L-glutaminyl-[protein] + H2O = L-glutamyl-[protein] + NH4(+). Its function is as follows. Involved in chemotaxis. Part of a chemotaxis signal transduction system that modulates chemotaxis in response to various stimuli. Catalyzes the demethylation of specific methylglutamate residues introduced into the chemoreceptors (methyl-accepting chemotaxis proteins or MCP) by CheR. Also mediates the irreversible deamidation of specific glutamine residues to glutamic acid. This Xanthomonas euvesicatoria pv. vesicatoria (strain 85-10) (Xanthomonas campestris pv. vesicatoria) protein is Protein-glutamate methylesterase/protein-glutamine glutaminase 2.